A 1342-amino-acid chain; its full sequence is DNA-directed RNA polymerase subunit beta (1342 aa).

The protein belongs to the RNA polymerase beta chain family. In terms of assembly, the RNAP catalytic core consists of 2 alpha, 1 beta, 1 beta' and 1 omega subunit. When a sigma factor is associated with the core the holoenzyme is formed, which can initiate transcription.

It carries out the reaction RNA(n) + a ribonucleoside 5'-triphosphate = RNA(n+1) + diphosphate. In terms of biological role, DNA-dependent RNA polymerase catalyzes the transcription of DNA into RNA using the four ribonucleoside triphosphates as substrates. In Wigglesworthia glossinidia brevipalpis, this protein is DNA-directed RNA polymerase subunit beta.